The following is a 1035-amino-acid chain: Valine--tRNA ligase (1035 aa).

A 'HIGH' region motif is present at residues 45 to 55 (PNVTGALHLGH). Positions 253–281 (EKLSDANEKEAVDLNKQIEALQKRREERL) form a coiled coil. Residue Lys619 participates in ATP binding. A coiled-coil region spans residues 967–1035 (DVEAELARLE…QDILKLQSKK (69 aa)).

This sequence belongs to the class-I aminoacyl-tRNA synthetase family. ValS type 1 subfamily. Monomer.

It is found in the cytoplasm. It carries out the reaction tRNA(Val) + L-valine + ATP = L-valyl-tRNA(Val) + AMP + diphosphate. In terms of biological role, catalyzes the attachment of valine to tRNA(Val). As ValRS can inadvertently accommodate and process structurally similar amino acids such as threonine, to avoid such errors, it has a 'posttransfer' editing activity that hydrolyzes mischarged Thr-tRNA(Val) in a tRNA-dependent manner. This Rhodopirellula baltica (strain DSM 10527 / NCIMB 13988 / SH1) protein is Valine--tRNA ligase.